A 242-amino-acid chain; its full sequence is Prosalusin (242 aa).

The N-terminal stretch at 1 to 26 is a signal peptide; the sequence is MAAATRGCRPWGSLLGLLGLVSAAAA. Positions 27–189 are excised as a propeptide; it reads AWDLASLRCT…SSWVVYGTNY (163 aa). Residue 93 to 100 coordinates ATP; it reads GWTGTGKS. Asn149 carries N-linked (GlcNAc...) asparagine glycosylation. A disordered region spans residues 210 to 242; the sequence is PPRRSGALPPAPAAPRPALRAQRAGPAGPGAKG. Residues 225 to 235 are compositionally biased toward low complexity; the sequence is RPALRAQRAGP. Lys241 is modified (lysine amide).

The protein belongs to the ClpA/ClpB family. Torsin subfamily. In terms of processing, amidation of salusin-alpha(29-Gly) by peptidylglycine alpha-amidating monooxygenase, PAM, converts Lys-241-Gly-242 to Lys-241-NH2 and gives raise to salusin-alpha. Isoform 4 is ubiquitously expressed, with high level in vascular endothelial cells and vascular smooth muscle cells.

Its subcellular location is the secreted. In terms of biological role, salusins -alpha and -beta may be endocrine and/or paracrine factors able to increase intracellular calcium concentrations and induce cell mitogenesis. Salusins may also be potent hypotensive peptides. In Homo sapiens (Human), this protein is Prosalusin (TOR2A).